We begin with the raw amino-acid sequence, 161 residues long: MPSDLCPDLQALAPLLGSWVGRGMGKYPTIQPFEYLEEVVFSHLDRPFLTYTQKTRAITDGKPLHAETGYLRVPQPGHIELVLAHHSDIAEIEVGTYSVTGDLIEVELVTTTIGLVPTAKQVTALGRFFRIDGDEFAYSVQMGAVGQPLQDHLVAVLHRKQ.

Residues 17–23 carry the GXWXGXG motif; sequence GSWVGRG. His152 is a binding site for heme b.

Belongs to the nitrobindin family. As to quaternary structure, homodimer. It depends on heme b as a cofactor.

The catalysed reaction is peroxynitrite = nitrate. It participates in nitrogen metabolism. Its function is as follows. Heme-binding protein able to scavenge peroxynitrite and to protect free L-tyrosine against peroxynitrite-mediated nitration, by acting as a peroxynitrite isomerase that converts peroxynitrite to nitrate. Therefore, this protein likely plays a role in peroxynitrite sensing and in the detoxification of reactive nitrogen and oxygen species (RNS and ROS, respectively). Is able to bind nitric oxide (NO) in vitro, but may act as a sensor of peroxynitrite levels in vivo. The protein is Peroxynitrite isomerase of Mycobacterium leprae (strain TN).